Consider the following 160-residue polypeptide: Large ribosomal subunit protein uL10 (160 aa).

It belongs to the universal ribosomal protein uL10 family. Part of the ribosomal stalk of the 50S ribosomal subunit. The N-terminus interacts with L11 and the large rRNA to form the base of the stalk. The C-terminus forms an elongated spine to which L12 dimers bind in a sequential fashion forming a multimeric L10(L12)X complex.

In terms of biological role, forms part of the ribosomal stalk, playing a central role in the interaction of the ribosome with GTP-bound translation factors. The chain is Large ribosomal subunit protein uL10 from Ehrlichia canis (strain Jake).